Reading from the N-terminus, the 235-residue chain is Probable queuosine precursor transporter (235 aa).

6 helical membrane passes run 17–37, 56–76, 87–107, 127–147, 155–175, and 201–221; these read IIWL…FVQI, FHST…DLTV, IIFV…VLFS, IAIA…IVFN, WWVA…FVFF, and FKLF…LNVI.

It belongs to the vitamin uptake transporter (VUT/ECF) (TC 2.A.88) family. Q precursor transporter subfamily.

It localises to the cell inner membrane. Involved in the import of queuosine (Q) precursors, required for Q precursor salvage. The polypeptide is Probable queuosine precursor transporter (Haemophilus influenzae (strain ATCC 51907 / DSM 11121 / KW20 / Rd)).